The primary structure comprises 49 residues: Putative DNA-directed RNA polymerase subunit omega (49 aa).

The protein belongs to the RNA polymerase subunit omega family.

It localises to the plastid. The protein resides in the chloroplast. The catalysed reaction is RNA(n) + a ribonucleoside 5'-triphosphate = RNA(n+1) + diphosphate. Its function is as follows. May be involved in RNA polymerase activity. The polypeptide is Putative DNA-directed RNA polymerase subunit omega (rpoZ) (Cyanidioschyzon merolae (strain NIES-3377 / 10D) (Unicellular red alga)).